The sequence spans 125 residues: Secretion system apparatus protein SsaO (125 aa).

In Salmonella typhimurium (strain LT2 / SGSC1412 / ATCC 700720), this protein is Secretion system apparatus protein SsaO (ssaO).